We begin with the raw amino-acid sequence, 208 residues long: LexA repressor (208 aa).

The H-T-H motif DNA-binding region spans 28–48 (VREIGEAVGLASSSTVHGHLA). Catalysis depends on for autocatalytic cleavage activity residues S130 and K168.

This sequence belongs to the peptidase S24 family. Homodimer.

The enzyme catalyses Hydrolysis of Ala-|-Gly bond in repressor LexA.. In terms of biological role, represses a number of genes involved in the response to DNA damage (SOS response), including recA and lexA. In the presence of single-stranded DNA, RecA interacts with LexA causing an autocatalytic cleavage which disrupts the DNA-binding part of LexA, leading to derepression of the SOS regulon and eventually DNA repair. The sequence is that of LexA repressor from Shouchella clausii (strain KSM-K16) (Alkalihalobacillus clausii).